The following is a 580-amino-acid chain: V-type proton ATPase catalytic subunit A (580 aa).

209–216 (GAFGCGKT) is a binding site for ATP.

This sequence belongs to the ATPase alpha/beta chains family. In terms of assembly, V-ATPase is a heteromultimeric enzyme composed of a peripheral catalytic V1 complex (main components: subunits A, B, C, D, E, and F) attached to an integral membrane V0 proton pore complex (main component: the proteolipid protein).

It catalyses the reaction ATP + H2O + 4 H(+)(in) = ADP + phosphate + 5 H(+)(out). Functionally, catalytic subunit of the peripheral V1 complex of vacuolar ATPase. V-ATPase vacuolar ATPase is responsible for acidifying a variety of intracellular compartments in eukaryotic cells. This chain is V-type proton ATPase catalytic subunit A, found in Hordeum vulgare (Barley).